Here is a 99-residue protein sequence, read N- to C-terminus: Large ribosomal subunit protein bL27 (99 aa).

A propeptide spanning residues 1 to 10 (MKLIFDIQLF) is cleaved from the precursor.

It belongs to the bacterial ribosomal protein bL27 family. Post-translationally, the N-terminus is cleaved by ribosomal processing cysteine protease Prp.

The sequence is that of Large ribosomal subunit protein bL27 from Caldicellulosiruptor bescii (strain ATCC BAA-1888 / DSM 6725 / KCTC 15123 / Z-1320) (Anaerocellum thermophilum).